The primary structure comprises 382 residues: Galactokinase (382 aa).

Residue 34–37 (EHTD) coordinates substrate. Residue 124 to 130 (GAGLSSS) participates in ATP binding. Mg(2+)-binding residues include serine 130 and glutamate 162. Aspartate 174 (proton acceptor) is an active-site residue. A substrate-binding site is contributed by tyrosine 223.

Belongs to the GHMP kinase family. GalK subfamily.

The protein localises to the cytoplasm. It carries out the reaction alpha-D-galactose + ATP = alpha-D-galactose 1-phosphate + ADP + H(+). Its pathway is carbohydrate metabolism; galactose metabolism. Catalyzes the transfer of the gamma-phosphate of ATP to D-galactose to form alpha-D-galactose-1-phosphate (Gal-1-P). This chain is Galactokinase, found in Escherichia coli O127:H6 (strain E2348/69 / EPEC).